We begin with the raw amino-acid sequence, 499 residues long: Ran-binding protein 3 (499 aa).

Residues 1-10 (MADLANEEKP) are compositionally biased toward basic and acidic residues. Disordered regions lie at residues 1–128 (MADL…GTNG), 141–196 (AASP…VFGQ), and 264–303 (LSPP…SLAE). Ala2 is subject to N-acetylalanine. Lys9 and Lys21 each carry N6-acetyllysine. A phosphoserine mark is found at Ser32, Ser33, and Ser40. The short motif at 49 to 57 (PPVKRERTS) is the Nuclear localization signal element. Thr56 is subject to Phosphothreonine. Composition is skewed to polar residues over residues 57–66 (SSLTQFPPSQ) and 116–128 (ALSQ…GTNG). Residue Ser58 is modified to Phosphoserine. Ser151, Ser265, Ser285, Ser287, and Ser304 each carry phosphoserine. A RanBD1 domain is found at 310-450 (KATARKCLLE…LALRSRVEQE (141 aa)). The tract at residues 447–499 (VEQEQEAKMPVPEPGAAPSNEEDDSDDDDVLAPSGATAAGAGDEGDGQTTGST) is disordered. Over residues 466–476 (NEEDDSDDDDV) the composition is skewed to acidic residues. A Phosphoserine modification is found at Ser471. The segment covering 481 to 499 (GATAAGAGDEGDGQTTGST) has biased composition (low complexity).

As to quaternary structure, interacts with CHC1 in a Ran-stimulated manner. Interacts with XPO1. Interacts (via its C-terminal R domain) with SMAD2 (dephosphorylated form via its MH1 and MH2 domains); the interaction results in the nuclear export of SMAD2 and termination of the TGF-beta signaling. Interacts (via its C-terminal R domain) with SMAD3 (dephosphorylated form via its MH1 domain); the interaction results in the nuclear export of SMAD3 and termination of the TGF-beta signaling. Phosphorylation at Ser-58 promotes its import into the nucleus.

It localises to the cytoplasm. Its subcellular location is the nucleus. Its function is as follows. Acts as a cofactor for XPO1/CRM1-mediated nuclear export, perhaps as export complex scaffolding protein. Bound to XPO1/CRM1, stabilizes the XPO1/CRM1-cargo interaction. In the absence of Ran-bound GTP prevents binding of XPO1/CRM1 to the nuclear pore complex. Binds to CHC1/RCC1 and increases the guanine nucleotide exchange activity of CHC1/RCC1. Recruits XPO1/CRM1 to CHC1/RCC1 in a Ran-dependent manner. Negative regulator of TGF-beta signaling through interaction with the R-SMAD proteins, SMAD2 and SMAD3, and mediating their nuclear export. This is Ran-binding protein 3 (RANBP3) from Macaca fascicularis (Crab-eating macaque).